We begin with the raw amino-acid sequence, 247 residues long: ATP synthase subunit a, chloroplastic (247 aa).

Transmembrane regions (helical) follow at residues 38-58, 95-115, 134-154, 199-219, and 220-240; these read QVLITSWVVITILLGSVIIAV, VPFIGTMFLFIFVSNWSGALL, INTTVALALLTSAAYFYAGLS, LVVVVLVSLVPLVVPIPVMFL, and GLFTSGIQALIFATLAAAYIG.

This sequence belongs to the ATPase A chain family. As to quaternary structure, F-type ATPases have 2 components, CF(1) - the catalytic core - and CF(0) - the membrane proton channel. CF(1) has five subunits: alpha(3), beta(3), gamma(1), delta(1), epsilon(1). CF(0) has four main subunits: a, b, b' and c.

The protein localises to the plastid. The protein resides in the chloroplast thylakoid membrane. Its function is as follows. Key component of the proton channel; it plays a direct role in the translocation of protons across the membrane. The sequence is that of ATP synthase subunit a, chloroplastic from Zea mays (Maize).